The primary structure comprises 374 residues: Glutamate 5-kinase (374 aa).

Lys-9 serves as a coordination point for ATP. Residues Ser-49, Asp-136, and Asn-148 each coordinate substrate. ATP-binding positions include 168–169 (TD) and 210–216 (TGGMRSK). Residues 276–354 (SGTITVDSGA…EEARQYSYLH (79 aa)) form the PUA domain.

It belongs to the glutamate 5-kinase family.

The protein localises to the cytoplasm. The enzyme catalyses L-glutamate + ATP = L-glutamyl 5-phosphate + ADP. The protein operates within amino-acid biosynthesis; L-proline biosynthesis; L-glutamate 5-semialdehyde from L-glutamate: step 1/2. Its function is as follows. Catalyzes the transfer of a phosphate group to glutamate to form L-glutamate 5-phosphate. In Geobacillus thermodenitrificans (strain NG80-2), this protein is Glutamate 5-kinase.